Reading from the N-terminus, the 88-residue chain is Cell division topological specificity factor (88 aa).

It belongs to the MinE family.

Functionally, prevents the cell division inhibition by proteins MinC and MinD at internal division sites while permitting inhibition at polar sites. This ensures cell division at the proper site by restricting the formation of a division septum at the midpoint of the long axis of the cell. This Clostridium novyi (strain NT) protein is Cell division topological specificity factor.